Reading from the N-terminus, the 867-residue chain is Inactive tyrosine-protein kinase kin-32 (867 aa).

One can recognise an FERM domain in the interval 3-327 (GLARVFLIGG…GYQMLYNQRD (325 aa)). Residues 367–631 (ITLKELIGGG…IIEDVRQQII (265 aa)) form the Protein kinase domain. ATP-binding positions include 373–381 (IGGGQFGNV) and lysine 400. Residues 662-691 (TLYRTMEDQKRQAEEDAKWLEQEDDEDEDD) are a coiled coil. Residues 674–729 (AEEDAKWLEQEDDEDEDDQDIDQIPSTSHSSVENIRTSNGYLHHTPTSTRSLRFED) form a disordered region. Residues 683–694 (QEDDEDEDDQDI) are compositionally biased toward acidic residues. The segment covering 698-724 (PSTSHSSVENIRTSNGYLHHTPTSTRS) has biased composition (polar residues).

Belongs to the protein kinase superfamily. Tyr protein kinase family. FAK subfamily. As to expression, expressed in body wall muscles and some neurons in the head.

Functionally, has apparently no tyrosine kinase activity in vitro when expressed in mammalian cells. The chain is Inactive tyrosine-protein kinase kin-32 from Caenorhabditis elegans.